The sequence spans 181 residues: Epidermin decarboxylase (181 aa).

His-67 is a catalytic residue.

Belongs to the HFCD (homooligomeric flavin containing Cys decarboxylase) superfamily. As to quaternary structure, homododecamer. Requires FMN as cofactor.

Functionally, catalyzes the removal of two reducing equivalents (oxidative decarboxylation) from the cysteine residue of the C-terminal meso-lanthionine of epidermin to form a --C==C-- double bond. In Staphylococcus epidermidis, this protein is Epidermin decarboxylase (epiD).